We begin with the raw amino-acid sequence, 204 residues long: Proteasome subunit beta type-3-A (204 aa).

It belongs to the peptidase T1B family. Component of the 20S core complex of the 26S proteasome. The 26S proteasome is composed of a core protease (CP), known as the 20S proteasome, capped at one or both ends by the 19S regulatory particle (RP/PA700). The 20S proteasome core is composed of 28 subunits that are arranged in four stacked rings, resulting in a barrel-shaped structure. The two end rings are each formed by seven alpha subunits, and the two central rings are each formed by seven beta subunits. The catalytic chamber with the active sites is on the inside of the barrel.

Its subcellular location is the cytoplasm. It localises to the nucleus. Its function is as follows. Non-catalytic component of the proteasome, a multicatalytic proteinase complex which is characterized by its ability to cleave peptides with Arg, Phe, Tyr, Leu, and Glu adjacent to the leaving group at neutral or slightly basic pH. The proteasome has an ATP-dependent proteolytic activity. The chain is Proteasome subunit beta type-3-A (PBC1) from Arabidopsis thaliana (Mouse-ear cress).